The following is a 342-amino-acid chain: Glycerol-3-phosphate dehydrogenase [NAD(P)+] (342 aa).

NADPH-binding residues include S13, W14, and K108. Sn-glycerol 3-phosphate-binding residues include K108, G139, and S141. NADPH is bound at residue A143. Sn-glycerol 3-phosphate is bound by residues K194, D247, S257, R258, and N259. K194 functions as the Proton acceptor in the catalytic mechanism. R258 contributes to the NADPH binding site. Residues V282 and E284 each coordinate NADPH.

The protein belongs to the NAD-dependent glycerol-3-phosphate dehydrogenase family.

It localises to the cytoplasm. It carries out the reaction sn-glycerol 3-phosphate + NAD(+) = dihydroxyacetone phosphate + NADH + H(+). The catalysed reaction is sn-glycerol 3-phosphate + NADP(+) = dihydroxyacetone phosphate + NADPH + H(+). It functions in the pathway membrane lipid metabolism; glycerophospholipid metabolism. Its function is as follows. Catalyzes the reduction of the glycolytic intermediate dihydroxyacetone phosphate (DHAP) to sn-glycerol 3-phosphate (G3P), the key precursor for phospholipid synthesis. The polypeptide is Glycerol-3-phosphate dehydrogenase [NAD(P)+] (Lactococcus lactis subsp. cremoris (strain MG1363)).